The sequence spans 223 residues: uncharacterized protein (223 aa).

This is an uncharacterized protein from Aquifex aeolicus (strain VF5).